Here is a 452-residue protein sequence, read N- to C-terminus: Phosphoglucosamine mutase (452 aa).

The active-site Phosphoserine intermediate is serine 103. Residues serine 103, aspartate 243, aspartate 245, and aspartate 247 each contribute to the Mg(2+) site. Serine 103 is modified (phosphoserine).

It belongs to the phosphohexose mutase family. Mg(2+) serves as cofactor. Activated by phosphorylation.

The catalysed reaction is alpha-D-glucosamine 1-phosphate = D-glucosamine 6-phosphate. Functionally, catalyzes the conversion of glucosamine-6-phosphate to glucosamine-1-phosphate. The sequence is that of Phosphoglucosamine mutase from Exiguobacterium sp. (strain ATCC BAA-1283 / AT1b).